Reading from the N-terminus, the 447-residue chain is Na(+)-translocating NADH-quinone reductase subunit A (447 aa).

This sequence belongs to the NqrA family. In terms of assembly, composed of six subunits; NqrA, NqrB, NqrC, NqrD, NqrE and NqrF.

It carries out the reaction a ubiquinone + n Na(+)(in) + NADH + H(+) = a ubiquinol + n Na(+)(out) + NAD(+). NQR complex catalyzes the reduction of ubiquinone-1 to ubiquinol by two successive reactions, coupled with the transport of Na(+) ions from the cytoplasm to the periplasm. NqrA to NqrE are probably involved in the second step, the conversion of ubisemiquinone to ubiquinol. The polypeptide is Na(+)-translocating NADH-quinone reductase subunit A (Haemophilus influenzae (strain PittGG)).